Here is a 262-residue protein sequence, read N- to C-terminus: Flap endonuclease Xni (262 aa).

D112 contacts Mg(2+). Positions 171 to 258 (QQLNDYWAIT…GFNLKDLRYT (88 aa)) constitute a 5'-3' exonuclease domain. The K(+) site is built by I179, V190, and I193. The segment at 192 to 197 (GIGSKG) is interaction with DNA.

This sequence belongs to the Xni family. Mg(2+) is required as a cofactor. K(+) serves as cofactor.

Has flap endonuclease activity. During DNA replication, flap endonucleases cleave the 5'-overhanging flap structure that is generated by displacement synthesis when DNA polymerase encounters the 5'-end of a downstream Okazaki fragment. In Psychromonas ingrahamii (strain DSM 17664 / CCUG 51855 / 37), this protein is Flap endonuclease Xni.